We begin with the raw amino-acid sequence, 390 residues long: Fluoride export protein 1 (390 aa).

Positions 1 to 22 are disordered; it reads MVAPLVSESQSSSIEETDEQQQ. Topologically, residues 1-72 are cytoplasmic; sequence MVAPLVSESQ…RFLDKTQKYY (72 aa). The chain crosses the membrane as a helical span at residues 73-93; sequence PVILNIVHGAIWGVLVRKGLM. Over 94–100 the chain is Extracellular; the sequence is SLTTYSG. A helical transmembrane segment spans residues 101-121; sequence SFLSGVIWANFAACVVMGLAI. Over 122-143 the chain is Cytoplasmic; it reads DGEVFWIRLLEEKDYPNKGAIP. The chain crosses the membrane as a helical span at residues 144-164; the sequence is VYTGLTTGFCGTVSSFSSVIL. The Extracellular segment spans residues 165–185; sequence EAFNKAADTDIGVRHHYPNGA. Residues 186–206 form a helical membrane-spanning segment; it reads YGIMQFLAVILAQFGLSIMGF. Over 207-229 the chain is Cytoplasmic; the sequence is HMGKQFSAVVDNYLPLVTKRIYK. A helical membrane pass occupies residues 230-250; that stretch reads VLELTSMILGVVLVVITCILI. The Extracellular segment spans residues 251 to 256; it reads GVKKQG. A helical transmembrane segment spans residues 257-279; the sequence is SWRSWTFSMLFAPFGALLRYYLS. At 280–290 the chain is on the cytoplasmic side; the sequence is KFLNNKVSNFP. A helical membrane pass occupies residues 291 to 311; that stretch reads LGTFTANFLGTLLLAVFTLLA. At 312-338 the chain is on the extracellular side; that stretch reads RGKLPGGKGHIVTNTIALHVLEGLDDG. The helical transmembrane segment at 339-359 threads the bilayer; the sequence is FCGGLTTVSTFVVELFGLKTL. At 360–368 the chain is on the cytoplasmic side; it reads FSYRYGTIS. The helical transmembrane segment at 369–389 threads the bilayer; it reads ILVCFAGVVLILGSYNWSVGL. A topological domain (extracellular) is located at residue aspartate 390.

It belongs to the fluoride channel Fluc/FEX (TC 1.A.43) family.

It localises to the cell membrane. The catalysed reaction is fluoride(in) = fluoride(out). In terms of biological role, fluoride channel required for the rapid expulsion of cytoplasmic fluoride. The chain is Fluoride export protein 1 from Candida albicans (strain SC5314 / ATCC MYA-2876) (Yeast).